Reading from the N-terminus, the 78-residue chain is Mitochondrial import inner membrane translocase subunit Tim9 (78 aa).

The Twin CX3C motif motif lies at 24-48; that stretch reads CFTSCVNEFGSRTVNAKEESCANNC. Intrachain disulfides connect Cys-24–Cys-48 and Cys-28–Cys-44.

Belongs to the small Tim family. In terms of assembly, heterohexamer; composed of 3 copies of tim-9/tin-9.1 and 3 copies of tim-10/tin-10, named soluble 70 kDa complex. The complex associates with the tim-22 component of the TIM22 complex. Interacts with multi-pass transmembrane proteins in transit.

The protein localises to the mitochondrion inner membrane. Functionally, mitochondrial intermembrane chaperone that participates in the import and insertion of multi-pass transmembrane proteins into the mitochondrial inner membrane. May also be required for the transfer of beta-barrel precursors from the TOM complex to the sorting and assembly machinery (SAM complex) of the outer membrane. Acts as a chaperone-like protein that protects the hydrophobic precursors from aggregation and guide them through the mitochondrial intermembrane space. The polypeptide is Mitochondrial import inner membrane translocase subunit Tim9 (tin-9.1) (Caenorhabditis briggsae).